The primary structure comprises 57 residues: Enolase (57 aa).

Catalysis depends on E25, which acts as the Proton donor.

It belongs to the enolase family. It depends on Mg(2+) as a cofactor.

The protein resides in the cytoplasm. Its subcellular location is the secreted. The protein localises to the cell surface. It catalyses the reaction (2R)-2-phosphoglycerate = phosphoenolpyruvate + H2O. Its pathway is carbohydrate degradation; glycolysis; pyruvate from D-glyceraldehyde 3-phosphate: step 4/5. Catalyzes the reversible conversion of 2-phosphoglycerate (2-PG) into phosphoenolpyruvate (PEP). It is essential for the degradation of carbohydrates via glycolysis. In Clostridioides difficile (Peptoclostridium difficile), this protein is Enolase.